Here is a 319-residue protein sequence, read N- to C-terminus: Inactive hydroxysteroid dehydrogenase-like protein 1 (319 aa).

The required for mitochondria translocation stretch occupies residues 2–82; it reads AAVDSFQLLY…CGASEAIAKA (81 aa). Residues 74–80, lysine 99, and aspartate 125 contribute to the NADP(+) site; that span reads GASEAIA.

Belongs to the short-chain dehydrogenases/reductases (SDR) family. 17-beta-HSD 3 subfamily.

It localises to the mitochondrion. The protein is Inactive hydroxysteroid dehydrogenase-like protein 1 (hsdl1) of Danio rerio (Zebrafish).